Reading from the N-terminus, the 81-residue chain is Photosystem I iron-sulfur center (81 aa).

2 4Fe-4S ferredoxin-type domains span residues 2–31 (SHAV…MVPW) and 39–68 (IAAS…IRVY). The [4Fe-4S] cluster site is built by Cys-11, Cys-14, Cys-17, Cys-21, Cys-48, Cys-51, Cys-54, and Cys-58.

The cyanobacterial PSI reaction center is composed of one copy each of PsaA,B,C,D,E,F,I,J,K,L,M and X, and forms trimeric complexes. It depends on [4Fe-4S] cluster as a cofactor.

The protein resides in the cellular thylakoid membrane. It catalyses the reaction reduced [plastocyanin] + hnu + oxidized [2Fe-2S]-[ferredoxin] = oxidized [plastocyanin] + reduced [2Fe-2S]-[ferredoxin]. Apoprotein for the two 4Fe-4S centers FA and FB of photosystem I (PSI); essential for photochemical activity. FB is the terminal electron acceptor of PSI, donating electrons to ferredoxin. The C-terminus interacts with PsaA/B/D and helps assemble the protein into the PSI complex. Required for binding of PsaD and PsaE to PSI. PSI is a plastocyanin/cytochrome c6-ferredoxin oxidoreductase, converting photonic excitation into a charge separation, which transfers an electron from the donor P700 chlorophyll pair to the spectroscopically characterized acceptors A0, A1, FX, FA and FB in turn. This Prochlorococcus marinus (strain MIT 9313) protein is Photosystem I iron-sulfur center.